We begin with the raw amino-acid sequence, 171 residues long: ATP synthase subunit b (171 aa).

Residues 12 to 34 (FGLNLNLFETNVINLAVVIFGLY) form a helical membrane-spanning segment.

Belongs to the ATPase B chain family. As to quaternary structure, F-type ATPases have 2 components, F(1) - the catalytic core - and F(0) - the membrane proton channel. F(1) has five subunits: alpha(3), beta(3), gamma(1), delta(1), epsilon(1). F(0) has four main subunits: a(1), b(1), b'(1) and c(10-14). The alpha and beta chains form an alternating ring which encloses part of the gamma chain. F(1) is attached to F(0) by a central stalk formed by the gamma and epsilon chains, while a peripheral stalk is formed by the delta, b and b' chains.

Its subcellular location is the cellular thylakoid membrane. In terms of biological role, f(1)F(0) ATP synthase produces ATP from ADP in the presence of a proton or sodium gradient. F-type ATPases consist of two structural domains, F(1) containing the extramembraneous catalytic core and F(0) containing the membrane proton channel, linked together by a central stalk and a peripheral stalk. During catalysis, ATP synthesis in the catalytic domain of F(1) is coupled via a rotary mechanism of the central stalk subunits to proton translocation. Its function is as follows. Component of the F(0) channel, it forms part of the peripheral stalk, linking F(1) to F(0). In Prochlorococcus marinus (strain MIT 9211), this protein is ATP synthase subunit b.